Consider the following 412-residue polypeptide: STAGA complex 65 subunit gamma (412 aa).

Positions 81–107 are disordered; sequence AQTQSQQQTEGVKAEESEPLPSCPGSP. At Ser-106 the chain carries Phosphoserine. Lys-269 participates in a covalent cross-link: Glycyl lysine isopeptide (Lys-Gly) (interchain with G-Cter in SUMO2). Residues Ser-321 and Ser-332 each carry the phosphoserine modification. Residues 364–412 form a disordered region; that stretch reads EEPMSGMSEAGLPQSPDDSDSSYGSHSTDSLMGSSPVFNQRCRKRMRKI. Over residues 384–393 the composition is skewed to low complexity; that stretch reads SSYGSHSTDS.

As to quaternary structure, component of the STAGA transcription coactivator-HAT complex, at least composed of SUPT3H, SUPT7L, GCN5L2, TAF5L, TAF6L, TADA3L, TAD1L, TAF10, TAF12 and TAF9. Sumoylated.

The protein localises to the nucleus. This chain is STAGA complex 65 subunit gamma (Supt7l), found in Mus musculus (Mouse).